Reading from the N-terminus, the 150-residue chain is 3-hydroxyacyl-[acyl-carrier-protein] dehydratase FabZ (150 aa).

His56 is an active-site residue.

It belongs to the thioester dehydratase family. FabZ subfamily.

Its subcellular location is the cytoplasm. It catalyses the reaction a (3R)-hydroxyacyl-[ACP] = a (2E)-enoyl-[ACP] + H2O. Involved in unsaturated fatty acids biosynthesis. Catalyzes the dehydration of short chain beta-hydroxyacyl-ACPs and long chain saturated and unsaturated beta-hydroxyacyl-ACPs. This Desulfotalea psychrophila (strain LSv54 / DSM 12343) protein is 3-hydroxyacyl-[acyl-carrier-protein] dehydratase FabZ.